Here is a 90-residue protein sequence, read N- to C-terminus: Large ribosomal subunit protein bL27 (90 aa).

A disordered region spans residues 1–21 (MASKKAGGSTRNGRDSEAKRL).

Belongs to the bacterial ribosomal protein bL27 family.

The sequence is that of Large ribosomal subunit protein bL27 from Neisseria meningitidis serogroup C (strain 053442).